Consider the following 347-residue polypeptide: L-threonine 3-dehydrogenase (347 aa).

Cysteine 42 serves as a coordination point for Zn(2+). Catalysis depends on charge relay system residues threonine 44 and histidine 47. Zn(2+)-binding residues include histidine 67, glutamate 68, cysteine 97, cysteine 100, cysteine 103, and cysteine 111. NAD(+) is bound by residues isoleucine 180, aspartate 200, arginine 205, 267 to 269 (LSL), and 292 to 293 (IT).

The protein belongs to the zinc-containing alcohol dehydrogenase family. Homotetramer. Zn(2+) is required as a cofactor.

The protein localises to the cytoplasm. It catalyses the reaction L-threonine + NAD(+) = (2S)-2-amino-3-oxobutanoate + NADH + H(+). It participates in amino-acid degradation; L-threonine degradation via oxydo-reductase pathway; glycine from L-threonine: step 1/2. Its function is as follows. Catalyzes the NAD(+)-dependent oxidation of L-threonine to 2-amino-3-ketobutyrate. In Bacillus velezensis (strain DSM 23117 / BGSC 10A6 / LMG 26770 / FZB42) (Bacillus amyloliquefaciens subsp. plantarum), this protein is L-threonine 3-dehydrogenase.